The sequence spans 117 residues: Probable non-functional T cell receptor gamma variable (117 aa).

Residues 1–20 form the signal peptide; the sequence is MRWALAVLLAFLSPASQISS. Residues 21–117 form the Ig-like domain; the sequence is NLEGRTKSVT…GFYYCATWDR (97 aa). Cys41 and Cys112 are joined by a disulfide. Asn105 carries N-linked (GlcNAc...) asparagine glycosylation.

In terms of assembly, gamma-delta TR is a heterodimer composed of a gamma and delta chain; disulfide-linked. The gamma-delta TR is associated with the transmembrane signaling CD3 coreceptor proteins following the stoichiometry: a single gamma-delta TR heterodimer associates with one CD3D-CD3E heterodimer, one CD3G-CD3E heterodimer and one CD247 homodimer forming a stable octameric structure. Upon activation, gamma-delta TR complex associates with FCER1G to initiate intracellular signaling.

It localises to the cell membrane. Functionally, probable non-functional open reading frame (ORF) of V region of the variable domain of T cell receptor (TR) gamma chain. Non-functional ORF generally cannot participate in the synthesis of a productive T cell receptor (TR) chain due to altered V-(D)-J or switch recombination and/or splicing site (at mRNA level) and/or conserved amino acid change (protein level). Gamma-delta TRs recognize a variety of self and foreign non-peptide antigens frequently expressed at the epithelial boundaries between the host and external environment, including endogenous lipids presented by MH-like protein CD1D and phosphoantigens presented by butyrophilin-like molecule BTN3A1. Upon antigen recognition induces rapid, innate-like immune responses involved in pathogen clearance and tissue repair. Binding of gamma-delta TR complex to antigen triggers phosphorylation of immunoreceptor tyrosine-based activation motifs (ITAMs) in the CD3 chains by the LCK and FYN kinases, allowing the recruitment, phosphorylation, and activation of ZAP70 that facilitates phosphorylation of the scaffolding proteins LCP2 and LAT. This lead to the formation of a supramolecular signalosome that recruits the phospholipase PLCG1, resulting in calcium mobilization and ERK activation, ultimately leading to T cell expansion and differentiation into effector cells. Gamma-delta TRs are produced through somatic rearrangement of a limited repertoire of variable (V), diversity (D), and joining (J) genes. The potential diversity of gamma-delta TRs is conferred by the unique ability to rearrange (D) genes in tandem and to utilize all three reading frames. The combinatorial diversity is considerably increased by the sequence exonuclease trimming and random nucleotide (N) region additions which occur during the V-(D)-J rearrangements. This chain is Probable non-functional T cell receptor gamma variable, found in Homo sapiens (Human).